Reading from the N-terminus, the 661-residue chain is Meiotic coiled-coil protein 1 (661 aa).

Coiled-coil stretches lie at residues 38–78 (LDAL…IIEE), 100–121 (RAIYNTKKNEAKNMYKEIERLS), 143–184 (DIKL…LSIK), 304–320 (ELIQSMKQEIGNLEVDL), and 360–387 (LKRLQKDFQLLKAKLICALREWEEDNEK). Disordered regions lie at residues 410-446 (QNQENISSNDNSKSSPESSPPARKTTGKIENKKLRNI), 467-562 (LIDR…TPAS), and 573-592 (LSRTPPKGEFTNSLDDTPTQ). Residues 414–430 (NISSNDNSKSSPESSPP) show a composition bias toward low complexity. Over residues 436–445 (GKIENKKLRN) the composition is skewed to basic and acidic residues. Composition is skewed to polar residues over residues 472-481 (VNQSPDTRSV), 548-562 (HNSVKLTGSSTTPAS), and 582-592 (FTNSLDDTPTQ).

The chain is Meiotic coiled-coil protein 1 (mcp1) from Schizosaccharomyces pombe (strain 972 / ATCC 24843) (Fission yeast).